The sequence spans 129 residues: Follitropin subunit beta (129 aa).

An N-terminal signal peptide occupies residues 1–20; that stretch reads MKTAQFYVLFFCWKAIWCNG. Cystine bridges form between cysteine 21–cysteine 69, cysteine 35–cysteine 84, cysteine 38–cysteine 122, cysteine 46–cysteine 100, cysteine 50–cysteine 102, and cysteine 105–cysteine 112. Asparagine 25 and asparagine 42 each carry an N-linked (GlcNAc...) asparagine glycan.

This sequence belongs to the glycoprotein hormones subunit beta family. As to quaternary structure, heterodimer. The active follitropin is a heterodimer composed of an alpha chain/CGA shared with other hormones and a unique beta chain/FSHB shown here.

It localises to the secreted. Together with the alpha chain CGA constitutes follitropin, the follicle-stimulating hormone, and provides its biological specificity to the hormone heterodimer. Binds FSHR, a G protein-coupled receptor, on target cells to activate downstream signaling pathways. Follitropin is involved in follicle development and spermatogenesis in reproductive organs. The chain is Follitropin subunit beta (FSHB) from Trichosurus vulpecula (Brush-tailed possum).